Reading from the N-terminus, the 177-residue chain is Large ribosomal subunit protein uL6 (177 aa).

The protein belongs to the universal ribosomal protein uL6 family. As to quaternary structure, part of the 50S ribosomal subunit.

Functionally, this protein binds to the 23S rRNA, and is important in its secondary structure. It is located near the subunit interface in the base of the L7/L12 stalk, and near the tRNA binding site of the peptidyltransferase center. In Bradyrhizobium sp. (strain BTAi1 / ATCC BAA-1182), this protein is Large ribosomal subunit protein uL6.